The primary structure comprises 183 residues: Ras-related protein Rap-2a (183 aa).

GTP is bound at residue 10–17 (GSGGVGKS). The Effector region motif lies at 32–40 (YDPTIEDFY). GTP-binding positions include 57 to 61 (DTAGT) and 116 to 119 (NKVD). S-palmitoyl cysteine attachment occurs at residues cysteine 176 and cysteine 177. Cysteine 180 is subject to Cysteine methyl ester. The S-farnesyl cysteine moiety is linked to residue cysteine 180. A propeptide spans 181–183 (VIL) (removed in mature form).

This sequence belongs to the small GTPase superfamily. Ras family. Interacts (GTP-bound form) with RUNDC3A. Interacts with PLCE1. Interacts with ARHGAP29, SGSM1, SGSM2 and SGSM3. Interacts (GTP-bound form preferentially) with TNIK (via the CNH domain); the interaction is direct and recruits RAP2A to the E3 ubiquitin ligase NEDD4. Interacts with MINK1. Interacts (GTP-bound form preferentially) with MAP4K4. Interacts with cytoskeletal actin. Interacts with RGS14; the interaction is GTP-dependent. In terms of processing, ubiquitinated; undergoes 'Lys-63' monoubiquitination and diubiquitination by NEDD4. Multiple lysine residues are probably modified. Ubiquitination requires TNIK, prevents interaction with effectors and inactivates RAP2A. Ubiquitination by the ECS(RAB40B) complex leads to RAP2A localization to lamellipodia plasma membrane, activation, and regulation of sorting at early endosomes for recycling to the lamellipodia plasma membrane. Palmitoylated. Palmitoylation is required for association with recycling endosome membranes and activation of TNIK.

It localises to the midbody. The protein localises to the cell projection. Its subcellular location is the lamellipodium membrane. It is found in the golgi apparatus. The protein resides in the recycling endosome membrane. It localises to the lysosome. The catalysed reaction is GTP + H2O = GDP + phosphate + H(+). With respect to regulation, activated by the guanine nucleotide-exchange factors RAPGEF3 and RAPGEF4 in a cAMP-dependent manner. Nucleotide exchange is also specifically stimulated by RAPGEF5, RASGEF1A and RASGEF1B. Small GTP-binding protein which cycles between a GDP-bound inactive and a GTP-bound active form. In its active form interacts with and regulates several effectors including MAP4K4, MINK1 and TNIK. Part of a signaling complex composed of NEDD4, RAP2A and TNIK which regulates neuronal dendrite extension and arborization during development. More generally, it is part of several signaling cascades and may regulate cytoskeletal rearrangements, cell migration, cell adhesion and cell spreading. In Sus scrofa (Pig), this protein is Ras-related protein Rap-2a (RAP2A).